The chain runs to 879 residues: Phosphoenolpyruvate carboxylase (879 aa).

Active-site residues include His-138 and Lys-545.

Belongs to the PEPCase type 1 family. Mg(2+) is required as a cofactor.

The enzyme catalyses oxaloacetate + phosphate = phosphoenolpyruvate + hydrogencarbonate. In terms of biological role, forms oxaloacetate, a four-carbon dicarboxylic acid source for the tricarboxylic acid cycle. In Histophilus somni (strain 2336) (Haemophilus somnus), this protein is Phosphoenolpyruvate carboxylase.